We begin with the raw amino-acid sequence, 263 residues long: Thiamine thiazole synthase (263 aa).

NAD(+) is bound by residues Ser43, 62–63, Gly70, Val134, and 160–162; these read ER and HID. Fe cation-binding residues include Asp162 and His177. Positions 180 and 227 each coordinate NAD(+). Residue Arg237 participates in glycine binding.

Belongs to the THI4 family. In terms of assembly, homooctamer; tetramer of dimers. The cofactor is Fe(2+).

The catalysed reaction is hydrogen sulfide + glycine + NAD(+) = ADP-5-ethyl-4-methylthiazole-2-carboxylate + nicotinamide + 3 H2O + H(+). It participates in cofactor biosynthesis; thiamine diphosphate biosynthesis. Involved in the biosynthesis of the thiazole moiety of thiamine. Catalyzes the conversion of NAD and glycine to adenosine diphosphate 5-(2-hydroxyethyl)-4-methylthiazole-2-carboxylate (ADT), an adenylated thiazole intermediate, using free sulfide as a source of sulfur. This Methanococcus aeolicus (strain ATCC BAA-1280 / DSM 17508 / OCM 812 / Nankai-3) protein is Thiamine thiazole synthase.